The chain runs to 142 residues: Hemoglobin subunit alpha-4 (142 aa).

Residues 2–142 (VLSAADKSNV…VSTVLTSKYR (141 aa)) enclose the Globin domain. H59 contacts O2. Position 88 (H88) interacts with heme b.

This sequence belongs to the globin family. Heterotetramer of two alpha chains and two beta chains. In terms of tissue distribution, red blood cells.

In terms of biological role, involved in oxygen transport from the lung to the various peripheral tissues. The protein is Hemoglobin subunit alpha-4 of Bubalus bubalis (Domestic water buffalo).